The following is a 174-amino-acid chain: Endoribonuclease YbeY (174 aa).

Zn(2+) is bound by residues His129, His133, and His139.

This sequence belongs to the endoribonuclease YbeY family. It depends on Zn(2+) as a cofactor.

The protein resides in the cytoplasm. Functionally, single strand-specific metallo-endoribonuclease involved in late-stage 70S ribosome quality control and in maturation of the 3' terminus of the 16S rRNA. The protein is Endoribonuclease YbeY of Lactobacillus helveticus (strain DPC 4571).